The chain runs to 147 residues: Putative protein adenylyltransferase MJ1305 (147 aa).

Residues 32-46 carry the GSX(10)DXD motif motif; it reads GSYARGTAVEYSDVD. Residues aspartate 44 and aspartate 46 each contribute to the Mg(2+) site.

This sequence belongs to the MntA antitoxin family. Mg(2+) serves as cofactor.

It carries out the reaction L-tyrosyl-[protein] + ATP = O-(5'-adenylyl)-L-tyrosyl-[protein] + diphosphate. The catalysed reaction is O-(5'-adenylyl)-L-tyrosyl-[protein] + ATP = O-[5'-(adenylyl-(5'-&gt;3')-adenylyl)]-L-tyrosyl-[protein] + diphosphate. Functionally, putative antitoxin component of a putative type VII toxin-antitoxin (TA) system. Its cognate toxin might be MJ1304, which it might AMPylate. The sequence is that of Putative protein adenylyltransferase MJ1305 from Methanocaldococcus jannaschii (strain ATCC 43067 / DSM 2661 / JAL-1 / JCM 10045 / NBRC 100440) (Methanococcus jannaschii).